Consider the following 538-residue polypeptide: MNYLNKINKINNKLFYSTTSSSNGIKNVVINNKDYLKSLKTNEIWELIVGIEVHAQTKTKEKLFSNSLNIGSMEGFKANSRVSFVDAAFPGALPVLNDKCVEQAIKTGLSIGGTINRYSFFDRKHYFYQDLPQGYQITQLTEPIVKGGSIELELSDGRQHQIRISHIQLEQDSGKSIHDLHPTKSLVDLNRAGIGLMEIVSHADFTSSEQVGCYIQKLQHLLKHIGSSDANMQFGEMRCDVNISVHKPNTEFGTRVELKNMISAKAIVSSIDSEAIRQIDLLENQNKIQRETRGFNQETGETYHLRTKEDEVDYRFFPDPDLPPLIISSERIETIKQQLGELPQDMKKRLIKQYSLTNYDAELLIQDQSIAKFFENSIIFNQNHNQKQRDIKKILNFLLRDIFSWLNSNNIQDFNSIINENQLSIEKFTQLLDLIEQGYISSNIGKTILFQILNGSDNRSPKDLIDSQGLSQISDDSLLDQLVQQLVENHPNEVTEYHQGKQRVYKFFMGEIMKKTKGRSNPEIVNNLLKKYLDLKKK.

It belongs to the GatB/GatE family. GatB subfamily. In terms of assembly, subunit of the heterotrimeric GatCAB amidotransferase (AdT) complex, composed of A, B and C subunits.

The protein localises to the mitochondrion. It catalyses the reaction L-glutamyl-tRNA(Gln) + L-glutamine + ATP + H2O = L-glutaminyl-tRNA(Gln) + L-glutamate + ADP + phosphate + H(+). Its function is as follows. Allows the formation of correctly charged Gln-tRNA(Gln) through the transamidation of misacylated Glu-tRNA(Gln) in the mitochondria. The reaction takes place in the presence of glutamine and ATP through an activated gamma-phospho-Glu-tRNA(Gln). In Dictyostelium discoideum (Social amoeba), this protein is Glutamyl-tRNA(Gln) amidotransferase subunit B, mitochondrial.